The chain runs to 894 residues: Exocyst complex component 2 (894 aa).

One can recognise an IPT/TIG domain in the interval 5-89; sequence PVVTGLSPKE…GTSTVQFRAY (85 aa). Residues 398 to 413 are compositionally biased toward basic and acidic residues; sequence HTSKDSGAQEKAKNRD. Positions 398-417 are disordered; that stretch reads HTSKDSGAQEKAKNRDSSQA.

The protein belongs to the SEC5 family. In terms of assembly, the exocyst complex is composed of Sec3/Exoc1, Sec5/Exoc2, Sec6/Exoc3, Sec8/Exoc4, Sec10/Exoc5, Sec15/Exoc6, Exo70/Exoc7 and Exo84/Exoc8.

In terms of biological role, component of the exocyst complex involved in the docking of exocytic vesicles with fusion sites on the plasma membrane. The sequence is that of Exocyst complex component 2 from Drosophila melanogaster (Fruit fly).